The sequence spans 2923 residues: Cadherin EGF LAG seven-pass G-type receptor 2 (2923 aa).

Positions 1-31 (MRSPATGVPLPTPPPPLLLLLLLLLPPPLLG) are cleaved as a signal peptide. The Extracellular segment spans residues 32–2380 (DQVGPCRSLG…GEILPLKTLT (2349 aa)). The tract at residues 154 to 198 (PGLRAGERSPEESLGGRRKRNVNTAPQFQPPSYQATVPENQPAGT) is disordered. Residues 158–168 (AGERSPEESLG) are compositionally biased toward basic and acidic residues. The span at 175-196 (VNTAPQFQPPSYQATVPENQPA) shows a compositional bias: polar residues. Cadherin domains follow at residues 182 to 289 (QPPS…DPVF), 290 to 399 (EQQE…APQF), 400 to 505 (SEKR…APIF), 506 to 610 (VSTP…NPTF), 611 to 712 (TQPE…RPVF), 713 to 815 (QSSH…APQF), 816 to 921 (LRDS…PPVF), 922 to 1023 (EQDE…PPVL), and 1028 to 1146 (ILFN…SPLL). N-linked (GlcNAc...) asparagine glycans are attached at residues Asn486, Asn557, and Asn701. Residues Asn1036, Asn1076, Asn1182, and Asn1212 are each glycosylated (N-linked (GlcNAc...) asparagine). In terms of domain architecture, EGF-like 1; calcium-binding spans 1228-1286 (DDNICLREPCENYMRCVSVLRFDSSAPFIASSSVLFRPIHPVGGLRCRCPPGFTGDYCE). Cystine bridges form between Cys1232–Cys1243, Cys1237–Cys1274, Cys1276–Cys1285, Cys1292–Cys1303, Cys1297–Cys1312, Cys1314–Cys1323, Cys1332–Cys1343, Cys1337–Cys1353, and Cys1355–Cys1365. The 37-residue stretch at 1288–1324 (EVDLCYSRPCGPHGRCRSREGGYTCLCRDGYTGEHCE) folds into the EGF-like 2; calcium-binding domain. The EGF-like 3; calcium-binding domain maps to 1328-1366 (RSGRCTPGVCKNGGTCVNLLVGGFKCDCPSGDFEKPYCQ). The 205-residue stretch at 1367–1571 (VTTRSFPAHS…IANNGTVPGC (205 aa)) folds into the Laminin G-like 1 domain. Residues Asn1501 and Asn1565 are each glycosylated (N-linked (GlcNAc...) asparagine). 4 disulfides stabilise this stretch: Cys1545–Cys1571, Cys1578–Cys1589, Cys1583–Cys1598, and Cys1600–Cys1609. One can recognise an EGF-like 4; calcium-binding domain in the interval 1574–1610 (KKNVCDSNTCHNGGTCVNQWDAFSCECPLGFGGKSCA). A (3R)-3-hydroxyasparagine modification is found at Asn1591. Residues 1614 to 1791 (ANPQHFLGSS…GESINVEQGC (178 aa)) form the Laminin G-like 2 domain. Asn1741 is a glycosylation site (N-linked (GlcNAc...) asparagine). 14 disulfides stabilise this stretch: Cys1761–Cys1791, Cys1797–Cys1808, Cys1802–Cys1817, Cys1819–Cys1828, Cys1832–Cys1843, Cys1837–Cys1855, Cys1857–Cys1866, Cys1887–Cys1899, Cys1889–Cys1906, Cys1908–Cys1921, Cys1924–Cys1936, Cys1926–Cys1943, Cys1945–Cys1954, and Cys1957–Cys1969. The 36-residue stretch at 1793–1828 (LPDPCDSNPCPANSYCSNDWDSYSCSCDPGYYGDNC) folds into the EGF-like 5; calcium-binding domain. Asn1810 carries the post-translational modification (3R)-3-hydroxyasparagine. Asn1827 is a glycosylation site (N-linked (GlcNAc...) asparagine). In terms of domain architecture, EGF-like 6; calcium-binding spans 1829 to 1867 (TNVCDLNPCEHQSVCTRKPSAPHGYTCECPPNYLGPYCE). The region spanning 1883–1922 (TCGPCNCDVSKGFDPDCNKTSGECHCKENHYRPPGSPTCL) is the EGF-like 7; calcium-binding domain. Residue Asn1900 is glycosylated (N-linked (GlcNAc...) asparagine). Residues 1924 to 1971 (CDCYPTGSLSRVCDPEDGQCPCKPGVIGRQCDRCDNPFAEVTTNGCEV) enclose the Laminin EGF-like domain. N-linked (GlcNAc...) asparagine glycans are attached at residues Asn2024, Asn2043, and Asn2061. A GAIN-B domain is found at 2199 to 2369 (ETTVILPESV…AVLMDVSRRE (171 aa)). The disordered stretch occupies residues 2213 to 2238 (PPVVRPAGPGEAQEPEELARRQRRHP). Disulfide bonds link Cys2319/Cys2351 and Cys2339/Cys2353. The GPS stretch occupies residues 2319 to 2369 (CVFWNHSILVSGTGGWSARGCEVVFRNESHVSCQCNHMTSFAVLMDVSRRE). Residues Asn2323 and Asn2345 are each glycosylated (N-linked (GlcNAc...) asparagine). The helical transmembrane segment at 2381 to 2401 (YVALGVTLAALLLTFFFLTLL) threads the bilayer. Topologically, residues 2402 to 2416 (RILRSNQHGIRRNLT) are cytoplasmic. A helical transmembrane segment spans residues 2417–2437 (AALGLAQLVFLLGINQADLPF). Ala2438 is a topological domain (extracellular). Residues 2439–2459 (CTVIAILLHFLYLCTFSWALL) form a helical membrane-spanning segment. The Cytoplasmic segment spans residues 2460–2480 (EALHLYRALTEVRDVNTGPMR). A helical transmembrane segment spans residues 2481–2501 (FYYMLGWGVPAFITGLAVGLD). Residues 2502 to 2519 (PEGYGNPDFCWLSIYDTL) lie on the Extracellular side of the membrane. A helical transmembrane segment spans residues 2520–2540 (IWSFAGPVAFAVSMSVFLYIL). At 2541 to 2560 (AARASCAAQRQGFEKKGPVS) the chain is on the cytoplasmic side. Residues 2561–2581 (GLQPSFAVLLLLSATWLLALL) form a helical membrane-spanning segment. The Extracellular portion of the chain corresponds to 2582–2591 (SVNSDTLLFH). The chain crosses the membrane as a helical span at residues 2592–2612 (YLFATCNCIQGPFIFLSYVVL). Over 2613-2923 (SKEVRKALKL…SEFLFFNFLH (311 aa)) the chain is Cytoplasmic. 2 disordered regions span residues 2688–2838 (SALN…HKGI) and 2854–2888 (LRLPLEQCTGSSRGSSASEGSRGGPPPRPPPRQSL). Composition is skewed to acidic residues over residues 2718–2730 (TDSDSDLSLEDDQ) and 2742–2753 (SEEEEEEEEEEA). The span at 2807–2819 (PEERLRENGDALS) shows a compositional bias: basic and acidic residues. The segment covering 2863-2873 (GSSRGSSASEG) has biased composition (low complexity).

The protein belongs to the G-protein coupled receptor 2 family. LN-TM7 subfamily. Heterodimer of 2 chains generated by proteolytic processing; the large extracellular N-terminal fragment and the membrane-bound C-terminal fragment predominantly remain associated and non-covalently linked. Post-translationally, the iron and 2-oxoglutarate dependent 3-hydroxylation of aspartate and asparagine is (R) stereospecific within EGF domains. In terms of processing, autoproteolytically processed at the GPS region of the GAIN-B domain; this cleavage modulates receptor activity. Highest expression in brain and testis.

It is found in the cell membrane. Its function is as follows. Receptor that may have an important role in cell/cell signaling during nervous system formation. This chain is Cadherin EGF LAG seven-pass G-type receptor 2, found in Homo sapiens (Human).